The following is a 143-amino-acid chain: Probable prefoldin subunit 2 (143 aa).

The protein belongs to the prefoldin subunit beta family. As to quaternary structure, heterohexamer of two PFD-alpha type and four PFD-beta type subunits.

Binds specifically to cytosolic chaperonin (c-CPN) and transfers target proteins to it. Binds to nascent polypeptide chain and promotes folding in an environment in which there are many competing pathways for nonnative proteins. In Drosophila melanogaster (Fruit fly), this protein is Probable prefoldin subunit 2.